Here is a 218-residue protein sequence, read N- to C-terminus: MPHSQTSAPRDSLAGVRLARGASPWLLPTVATAAVSLLRARRSGTAKAVAVPATALAAGMLWFFRDPEREITQGRVVSPADGVVQSIMPWKDGRTRVAIFMSPLNVHVNRAPLAGTVTSVEHVPGGFVPAFNKESENNERVVWHFDTELGDIEMIQIAGAVARRIVPYVPQGTKVEQGERVGLIRFGSRVDLYLPEGVEVDVEVGQKTVAGVTRIDRD.

Ser-188 serves as the catalytic Schiff-base intermediate with substrate; via pyruvic acid. Position 188 is a pyruvic acid (Ser); by autocatalysis (Ser-188).

The protein belongs to the phosphatidylserine decarboxylase family. PSD-A subfamily. As to quaternary structure, heterodimer of a large membrane-associated beta subunit and a small pyruvoyl-containing alpha subunit. The cofactor is pyruvate. In terms of processing, is synthesized initially as an inactive proenzyme. Formation of the active enzyme involves a self-maturation process in which the active site pyruvoyl group is generated from an internal serine residue via an autocatalytic post-translational modification. Two non-identical subunits are generated from the proenzyme in this reaction, and the pyruvate is formed at the N-terminus of the alpha chain, which is derived from the carboxyl end of the proenzyme. The post-translation cleavage follows an unusual pathway, termed non-hydrolytic serinolysis, in which the side chain hydroxyl group of the serine supplies its oxygen atom to form the C-terminus of the beta chain, while the remainder of the serine residue undergoes an oxidative deamination to produce ammonia and the pyruvoyl prosthetic group on the alpha chain.

Its subcellular location is the cell membrane. The enzyme catalyses a 1,2-diacyl-sn-glycero-3-phospho-L-serine + H(+) = a 1,2-diacyl-sn-glycero-3-phosphoethanolamine + CO2. The protein operates within phospholipid metabolism; phosphatidylethanolamine biosynthesis; phosphatidylethanolamine from CDP-diacylglycerol: step 2/2. Its function is as follows. Catalyzes the formation of phosphatidylethanolamine (PtdEtn) from phosphatidylserine (PtdSer). The chain is Phosphatidylserine decarboxylase proenzyme from Streptomyces coelicolor (strain ATCC BAA-471 / A3(2) / M145).